The chain runs to 806 residues: Zygotic DNA replication licensing factor mcm3 (806 aa).

The MCM domain occupies Val-295–Leu-502. Residue Gly-345–Ser-352 coordinates ATP. The Arginine finger motif lies at Ser-477–Asp-480. The interval Lys-662–Ser-738 is disordered. Basic and acidic residues predominate over residues Ala-693 to Tyr-702.

This sequence belongs to the MCM family. In terms of assembly, component of the mcm2-7 complex (RLF-M). The complex forms a toroidal hexameric ring with the proposed subunit order mcm2-mcm6-mcm4-mcm7-mcm3-mcm5. Begins to associate with zmcm6 into mcm complexes at the neurula stage. Component of the CMG helicase complex, composed of the mcm2-7 complex, the GINS complex and cdc45.

It localises to the nucleus. Its subcellular location is the chromosome. The enzyme catalyses ATP + H2O = ADP + phosphate + H(+). In terms of biological role, acts as a component of the mcm2-7 complex (mcm complex) which is the putative replicative helicase essential for 'once per cell cycle' DNA replication initiation and elongation in eukaryotic cells. The active ATPase sites in the mcm2-7 ring are formed through the interaction surfaces of two neighboring subunits such that a critical structure of a conserved arginine finger motif is provided in trans relative to the ATP-binding site of the Walker A box of the adjacent subunit. The six ATPase active sites, however, are likely to contribute differentially to the complex helicase activity. The existence of maternal and zygotic forms of mcm3 and mcm6 suggests that specific forms of mcm2-7 complexes may be used during different stages of development. This Xenopus laevis (African clawed frog) protein is Zygotic DNA replication licensing factor mcm3.